The chain runs to 346 residues: Fusaric acid resistance protein FusC (346 aa).

A run of 4 helical transmembrane segments spans residues 10–30 (VIIG…RYTG), 248–268 (VILA…VMLV), 291–311 (MGMG…GIYP), and 315–335 (GFVL…YMSL).

Belongs to the aromatic acid exporter ArAE (TC 2.A.85) family.

It localises to the cell membrane. Functionally, involved in the resistance (detoxification) of the fungal toxin fusaric acid. This Burkholderia cepacia (Pseudomonas cepacia) protein is Fusaric acid resistance protein FusC (fusC).